The primary structure comprises 312 residues: Methionyl-tRNA formyltransferase (312 aa).

Residue 117–120 (SLLP) coordinates (6S)-5,6,7,8-tetrahydrofolate.

Belongs to the Fmt family.

It carries out the reaction L-methionyl-tRNA(fMet) + (6R)-10-formyltetrahydrofolate = N-formyl-L-methionyl-tRNA(fMet) + (6S)-5,6,7,8-tetrahydrofolate + H(+). In terms of biological role, attaches a formyl group to the free amino group of methionyl-tRNA(fMet). The formyl group appears to play a dual role in the initiator identity of N-formylmethionyl-tRNA by promoting its recognition by IF2 and preventing the misappropriation of this tRNA by the elongation apparatus. This chain is Methionyl-tRNA formyltransferase, found in Bordetella parapertussis (strain 12822 / ATCC BAA-587 / NCTC 13253).